Consider the following 419-residue polypeptide: LWamide neuropeptides (419 aa).

Positions 1 to 27 (MEKEMRNLMLLVLLTVILDNGIGKCNA) are cleaved as a signal peptide. The disordered stretch occupies residues 27–48 (AKSEEDQDGNARNNRIDKNDDN). Positions 28–104 (KSEEDQDGNA…ENLDIDSTVQ (77 aa)) are excised as a propeptide. Tryptophan amide is present on Trp110. The propeptide occupies 113–140 (EADFDNTRAHDSAQISDEKQSGLWVGDA). The span at 120 to 132 (RAHDSAQISDEKQ) shows a compositional bias: basic and acidic residues. The interval 120–332 (RAHDSAQISD…PGLWGRQVED (213 aa)) is disordered. Trp146 carries the post-translational modification Tryptophan amide. A propeptide spanning residues 149-150 (DA) is cleaved from the precursor. Position 156 is a tryptophan amide (Trp156). Residues 159 to 160 (DA) constitute a propeptide that is removed on maturation. Residue Trp166 is modified to Tryptophan amide. Positions 169 to 170 (DA) are excised as a propeptide. Trp176 carries the tryptophan amide modification. Positions 179–180 (DA) are excised as a propeptide. Position 186 is a tryptophan amide (Trp186). A propeptide spanning residues 189–190 (DA) is cleaved from the precursor. Trp196 carries the post-translational modification Tryptophan amide. A propeptide spanning residues 199–200 (DA) is cleaved from the precursor. Trp206 bears the Tryptophan amide mark. A propeptide spanning residues 209-210 (DA) is cleaved from the precursor. Tryptophan amide is present on Trp216. The propeptide at 218–220 (GDA) is seems to have a sequencing error or a mutation in position 218; Gly instead of Arg. Residue Trp226 is modified to Tryptophan amide. A propeptide spanning residues 229–230 (DA) is cleaved from the precursor. Position 236 is a tryptophan amide (Trp236). Residues 239 to 240 (DA) constitute a propeptide that is removed on maturation. Position 246 is a tryptophan amide (Trp246). The propeptide occupies 249–250 (DA). Trp256 carries the post-translational modification Tryptophan amide. A propeptide spanning residues 259 to 260 (DA) is cleaved from the precursor. Trp266 carries the post-translational modification Tryptophan amide. Residues 269-270 (DA) constitute a propeptide that is removed on maturation. At Trp276 the chain carries Tryptophan amide. A propeptide spanning residues 279–280 (DT) is cleaved from the precursor. At Trp286 the chain carries Tryptophan amide. The propeptide occupies 289–290 (DA). Trp296 is subject to Tryptophan amide. Propeptides lie at residues 299–300 (DA) and 309–320 (DNNVIKSRSDDA). Position 326 is a tryptophan amide (Trp326). Positions 329–419 (QVEDGPTKIW…RRNNKKNNKF (91 aa)) are excised as a propeptide.

Belongs to the LWamide neuropeptide family. In terms of tissue distribution, in planula larvae, expressed in a narrow ring of ectodermal neurosensory cells around the widest circumference at the anterior of the larvae. In primary polyps, expression is confined to endodermal cells of the hypostome. In mature polyps, expression is strong in the epidermis from the tentacle level to the base of the polyp and weak in the gastrodermal cells in the apical hypostome.

Its subcellular location is the secreted. Functionally, LWamide peptides may be involved in induction of metamorphosis. In Hydractinia echinata (Snail fur), this protein is LWamide neuropeptides.